Reading from the N-terminus, the 123-residue chain is Small ribosomal subunit protein uS13 (123 aa).

The interval 95-123 (GLPVRGQKTKTNARTRKGPKKAVASKKKK) is disordered.

This sequence belongs to the universal ribosomal protein uS13 family. As to quaternary structure, part of the 30S ribosomal subunit. Forms a loose heterodimer with protein S19. Forms two bridges to the 50S subunit in the 70S ribosome.

Its function is as follows. Located at the top of the head of the 30S subunit, it contacts several helices of the 16S rRNA. In the 70S ribosome it contacts the 23S rRNA (bridge B1a) and protein L5 of the 50S subunit (bridge B1b), connecting the 2 subunits; these bridges are implicated in subunit movement. Contacts the tRNAs in the A and P-sites. In Clostridium acetobutylicum (strain ATCC 824 / DSM 792 / JCM 1419 / IAM 19013 / LMG 5710 / NBRC 13948 / NRRL B-527 / VKM B-1787 / 2291 / W), this protein is Small ribosomal subunit protein uS13.